Here is a 349-residue protein sequence, read N- to C-terminus: Protein-glutamate methylesterase/protein-glutamine glutaminase 3 (349 aa).

A Response regulatory domain is found at 2-119 (DVLIVDDSPV…HPDFERDVES (118 aa)). D52 carries the 4-aspartylphosphate modification. In terms of domain architecture, CheB-type methylesterase spans 157-340 (EGFQPGVIAI…LSPPRIAALL (184 aa)). Active-site residues include S169, H196, and D289.

This sequence belongs to the CheB family. In terms of processing, phosphorylated by CheA. Phosphorylation of the N-terminal regulatory domain activates the methylesterase activity.

The protein localises to the cytoplasm. The enzyme catalyses [protein]-L-glutamate 5-O-methyl ester + H2O = L-glutamyl-[protein] + methanol + H(+). It carries out the reaction L-glutaminyl-[protein] + H2O = L-glutamyl-[protein] + NH4(+). Involved in chemotaxis. Part of a chemotaxis signal transduction system that modulates chemotaxis in response to various stimuli. Catalyzes the demethylation of specific methylglutamate residues introduced into the chemoreceptors (methyl-accepting chemotaxis proteins or MCP) by CheR. Also mediates the irreversible deamidation of specific glutamine residues to glutamic acid. The chain is Protein-glutamate methylesterase/protein-glutamine glutaminase 3 from Hahella chejuensis (strain KCTC 2396).